The following is a 674-amino-acid chain: 1,4-alpha-glucan branching enzyme GlgB 1 (674 aa).

The active-site Nucleophile is the D336. Catalysis depends on E389, which acts as the Proton donor.

Belongs to the glycosyl hydrolase 13 family. GlgB subfamily. In terms of assembly, monomer.

The catalysed reaction is Transfers a segment of a (1-&gt;4)-alpha-D-glucan chain to a primary hydroxy group in a similar glucan chain.. Its pathway is glycan biosynthesis; glycogen biosynthesis. Its function is as follows. Catalyzes the formation of the alpha-1,6-glucosidic linkages in glycogen by scission of a 1,4-alpha-linked oligosaccharide from growing alpha-1,4-glucan chains and the subsequent attachment of the oligosaccharide to the alpha-1,6 position. In Clostridium perfringens (strain SM101 / Type A), this protein is 1,4-alpha-glucan branching enzyme GlgB 1.